The following is a 927-amino-acid chain: DNA-binding protein RFX6 (927 aa).

Disordered stretches follow at residues 1–21 (MAKV…PQLP) and 81–108 (NFSS…QKKS). The segment at residues 123-198 (TLQWLEDNYI…YHYYGIGIKE (76 aa)) is a DNA-binding region (RFX-type winged-helix).

This sequence belongs to the RFX family. In terms of assembly, interacts with RFX3. As to expression, in the adult pancreas, expression is restricted to the islets where it could be detected in all endocrine lineages.

It localises to the nucleus. Its function is as follows. Transcription factor required to direct islet cell differentiation during endocrine pancreas development. Specifically required for the differentiation of 4 of the 5 islet cell types and for the production of insulin. Not required for pancreatic PP (polypeptide-producing) cells differentiation. Acts downstream of NEUROG3 and regulates the transcription factors involved in beta-cell maturation and function, thereby restricting the expression of the beta-cell differentiation and specification genes, and thus the beta-cell fate choice. Activates transcription by forming a heterodimer with RFX3 and binding to the X-box in the promoter of target genes. Involved in glucose-stimulated insulin secretion by promoting insulin and L-type calcium channel gene transcription. The sequence is that of DNA-binding protein RFX6 (Rfx6) from Mus musculus (Mouse).